We begin with the raw amino-acid sequence, 439 residues long: Proline--tRNA ligase (439 aa).

This sequence belongs to the class-II aminoacyl-tRNA synthetase family. ProS type 2 subfamily. Homodimer.

It localises to the cytoplasm. It carries out the reaction tRNA(Pro) + L-proline + ATP = L-prolyl-tRNA(Pro) + AMP + diphosphate. Its function is as follows. Catalyzes the attachment of proline to tRNA(Pro) in a two-step reaction: proline is first activated by ATP to form Pro-AMP and then transferred to the acceptor end of tRNA(Pro). The protein is Proline--tRNA ligase of Hyphomonas neptunium (strain ATCC 15444).